Here is a 310-residue protein sequence, read N- to C-terminus: N-acetyl-gamma-glutamyl-phosphate reductase (310 aa).

Cys117 is a catalytic residue.

It belongs to the NAGSA dehydrogenase family. Type 2 subfamily.

The protein localises to the cytoplasm. The enzyme catalyses N-acetyl-L-glutamate 5-semialdehyde + phosphate + NADP(+) = N-acetyl-L-glutamyl 5-phosphate + NADPH + H(+). It participates in amino-acid biosynthesis; L-arginine biosynthesis; N(2)-acetyl-L-ornithine from L-glutamate: step 3/4. Its function is as follows. Catalyzes the NADPH-dependent reduction of N-acetyl-5-glutamyl phosphate to yield N-acetyl-L-glutamate 5-semialdehyde. The protein is N-acetyl-gamma-glutamyl-phosphate reductase of Sinorhizobium medicae (strain WSM419) (Ensifer medicae).